The following is a 198-amino-acid chain: Ribonuclease HII (198 aa).

The RNase H type-2 domain occupies 10–198; sequence HLVAGVDEVG…PVKRALGLVS (189 aa). The a divalent metal cation site is built by aspartate 16, glutamate 17, and aspartate 108.

This sequence belongs to the RNase HII family. Requires Mn(2+) as cofactor. It depends on Mg(2+) as a cofactor.

It localises to the cytoplasm. The catalysed reaction is Endonucleolytic cleavage to 5'-phosphomonoester.. Its function is as follows. Endonuclease that specifically degrades the RNA of RNA-DNA hybrids. The chain is Ribonuclease HII from Salmonella schwarzengrund (strain CVM19633).